The following is a 179-amino-acid chain: Acireductone dioxygenase (179 aa).

Residues 1–12 (MVEAWYMDDSEE) are compositionally biased toward acidic residues. Residues 1–21 (MVEAWYMDDSEEDQRRPHRLE) are disordered. His88, His90, Glu94, and His133 together coordinate Fe(2+). 4 residues coordinate Ni(2+): His88, His90, Glu94, and His133.

This sequence belongs to the acireductone dioxygenase (ARD) family. In terms of assembly, monomer. Interacts with MMP14. Fe(2+) serves as cofactor. Ni(2+) is required as a cofactor.

The protein resides in the cytoplasm. Its subcellular location is the nucleus. It is found in the cell membrane. It catalyses the reaction 1,2-dihydroxy-5-(methylsulfanyl)pent-1-en-3-one + O2 = 4-methylsulfanyl-2-oxobutanoate + formate + 2 H(+). It carries out the reaction 1,2-dihydroxy-5-(methylsulfanyl)pent-1-en-3-one + O2 = 3-(methylsulfanyl)propanoate + CO + formate + 2 H(+). The protein operates within amino-acid biosynthesis; L-methionine biosynthesis via salvage pathway; L-methionine from S-methyl-5-thio-alpha-D-ribose 1-phosphate: step 5/6. Catalyzes 2 different reactions between oxygen and the acireductone 1,2-dihydroxy-3-keto-5-methylthiopentene (DHK-MTPene) depending upon the metal bound in the active site. Fe-containing acireductone dioxygenase (Fe-ARD) produces formate and 2-keto-4-methylthiobutyrate (KMTB), the alpha-ketoacid precursor of methionine in the methionine recycle pathway. Ni-containing acireductone dioxygenase (Ni-ARD) produces methylthiopropionate, carbon monoxide and formate, and does not lie on the methionine recycle pathway. Also down-regulates cell migration mediated by MMP14. The protein is Acireductone dioxygenase of Monodelphis domestica (Gray short-tailed opossum).